The following is a 20-amino-acid chain: Brevinin-1DYc (20 aa).

C14 and C20 form a disulfide bridge.

As to expression, expressed by the skin glands.

It localises to the secreted. Functionally, antimicrobial peptide. Has low activity against the Gram-positive bacterium S.aureus and the Gram-negative bacterium E.coli (MIC&lt;15 uM). Has a strong hemolytic activity. The polypeptide is Brevinin-1DYc (Rana dybowskii (Dybovsky's frog)).